A 61-amino-acid polypeptide reads, in one-letter code: Small ribosomal subunit protein uS14 (61 aa).

Cys24, Cys27, Cys40, and Cys43 together coordinate Zn(2+).

This sequence belongs to the universal ribosomal protein uS14 family. Zinc-binding uS14 subfamily. Part of the 30S ribosomal subunit. Contacts proteins S3 and S10. It depends on Zn(2+) as a cofactor.

Its function is as follows. Binds 16S rRNA, required for the assembly of 30S particles and may also be responsible for determining the conformation of the 16S rRNA at the A site. The chain is Small ribosomal subunit protein uS14 from Campylobacter hominis (strain ATCC BAA-381 / DSM 21671 / CCUG 45161 / LMG 19568 / NCTC 13146 / CH001A).